Reading from the N-terminus, the 194-residue chain is Phosphoheptose isomerase (194 aa).

In terms of domain architecture, SIS spans 37–194; that stretch reads IAKSFKNKNK…IIEKEMKKIN (158 aa). 52–54 serves as a coordination point for substrate; the sequence is NGG. Residues His61 and Glu65 each coordinate Zn(2+). Residues Glu65, 93-94, 119-121, Ser124, and Gln172 contribute to the substrate site; these read ND and STS. Zn(2+)-binding residues include Gln172 and His180.

Belongs to the SIS family. GmhA subfamily. Homotetramer. Requires Zn(2+) as cofactor.

Its subcellular location is the cytoplasm. The catalysed reaction is 2 D-sedoheptulose 7-phosphate = D-glycero-alpha-D-manno-heptose 7-phosphate + D-glycero-beta-D-manno-heptose 7-phosphate. It participates in carbohydrate biosynthesis; D-glycero-D-manno-heptose 7-phosphate biosynthesis; D-glycero-alpha-D-manno-heptose 7-phosphate and D-glycero-beta-D-manno-heptose 7-phosphate from sedoheptulose 7-phosphate: step 1/1. Its function is as follows. Catalyzes the isomerization of sedoheptulose 7-phosphate in D-glycero-D-manno-heptose 7-phosphate. The sequence is that of Phosphoheptose isomerase from Buchnera aphidicola subsp. Schizaphis graminum (strain Sg).